A 256-amino-acid chain; its full sequence is 3-hydroxy-5-phosphonooxypentane-2,4-dione thiolase (256 aa).

Lys-168 acts as the Schiff-base intermediate with substrate in catalysis.

This sequence belongs to the DeoC/FbaB aldolase family. Homodecamer.

The protein localises to the cytoplasm. It catalyses the reaction dihydroxyacetone phosphate + acetyl-CoA = 3-hydroxy-2,4-dioxopentyl phosphate + CoA. Functionally, involved in the degradation of phospho-AI-2, thereby terminating induction of the lsr operon and closing the AI-2 signaling cycle. Catalyzes the transfer of an acetyl moiety from 3-hydroxy-5-phosphonooxypentane-2,4-dione to CoA to form glycerone phosphate and acetyl-CoA. This chain is 3-hydroxy-5-phosphonooxypentane-2,4-dione thiolase (lsrF), found in Shigella flexneri.